Here is a 200-residue protein sequence, read N- to C-terminus: Probable molybdenum cofactor guanylyltransferase (200 aa).

GTP-binding positions include L9–G11, K21, D69, and D100. A Mg(2+)-binding site is contributed by D100.

The protein belongs to the MobA family. The cofactor is Mg(2+).

The protein localises to the cytoplasm. The catalysed reaction is Mo-molybdopterin + GTP + H(+) = Mo-molybdopterin guanine dinucleotide + diphosphate. Functionally, transfers a GMP moiety from GTP to Mo-molybdopterin (Mo-MPT) cofactor (Moco or molybdenum cofactor) to form Mo-molybdopterin guanine dinucleotide (Mo-MGD) cofactor. This Bacillus anthracis (strain CDC 684 / NRRL 3495) protein is Probable molybdenum cofactor guanylyltransferase.